A 724-amino-acid chain; its full sequence is Ribosomal RNA processing protein 1 homolog B (724 aa).

Positions 331-576 are disordered; sequence NGAPLSSAED…SKKKKKTMKL (246 aa). Ser336 and Ser370 each carry phosphoserine. Basic residues predominate over residues 373–386; it reads HIHKKKRKKRKRSH. Phosphoserine occurs at positions 432 and 438. Basic residues predominate over residues 448-461; it reads HNKRKRPRKKKLRA. Residues 483-496 are compositionally biased toward low complexity; it reads SGHSQSSAAHISSS. Phosphoserine is present on Ser494. Polar residues-rich tracts occupy residues 513-528 and 548-564; these read DSSS…TPTS and KTAS…SQKP. At Lys618 the chain carries N6-acetyllysine. The disordered stretch occupies residues 625–649; sequence AKNSSATRPQGPAGQLNKTPSSSKK. The segment covering 640–649 has biased composition (polar residues); sequence LNKTPSSSKK. Ser668 and Ser672 each carry phosphoserine. The residue at position 678 (Arg678) is a Citrulline. Positions 687–724 are disordered; sequence PLHGVLKTATSSPASTPLSPMRLPATTPKRRPRAADFF. Thr694 is modified (phosphothreonine). A compositionally biased stretch (low complexity) spans 694-706; sequence TATSSPASTPLSP. Phosphoserine is present on residues Ser698 and Ser701.

This sequence belongs to the RRP1 family. In terms of assembly, interacts with the transcriptional activator E2F1. Interacts with serine/threonine-protein phosphatase PP1 subunits PPP1CB and PPP1CC but not with PPP1CA. Interacts with 60S ribosomal proteins RPL5 and RPL27, ribosomal processing protein RRP1/NNP1 and other nucleolar proteins including NOP2/NOL1 and FBL. Also interacts with nucleolar protein NPM1/B23. Interacts with splicing factor SRSF1 and LUC7L3/CROP. Interacts with GTPase activator SIPA1. Interacts with H1-10, NCL, PARP1, TRIM28 and YBX3. Citrullinated by PADI4.

It localises to the nucleus. The protein resides in the nucleolus. Its subcellular location is the nucleoplasm. It is found in the chromosome. Positively regulates DNA damage-induced apoptosis by acting as a transcriptional coactivator of proapoptotic target genes of the transcriptional activator E2F1. Likely to play a role in ribosome biogenesis by targeting serine/threonine protein phosphatase PP1 to the nucleolus. Involved in regulation of mRNA splicing. Inhibits SIPA1 GTPase activity. Involved in regulating expression of extracellular matrix genes. Associates with chromatin and may play a role in modulating chromatin structure. The chain is Ribosomal RNA processing protein 1 homolog B (Rrp1b) from Mus musculus (Mouse).